Reading from the N-terminus, the 489-residue chain is GTPase Der (489 aa).

EngA-type G domains lie at 30-199 and 227-403; these read PVVS…KDKP and FRLA…SRSH. GTP is bound by residues 36–43, 85–89, 151–154, 233–240, 280–284, and 345–348; these read GRQNVGKS, DTPGL, NKAD, GKPNSGKS, DTAGI, and NKWD. The KH-like domain occupies 404–488; that stretch reads RKVSTSELNK…PIRLEFRSDR (85 aa).

It belongs to the TRAFAC class TrmE-Era-EngA-EngB-Septin-like GTPase superfamily. EngA (Der) GTPase family. Associates with the 50S ribosomal subunit.

Functionally, GTPase that plays an essential role in the late steps of ribosome biogenesis. The polypeptide is GTPase Der (Leptospira interrogans serogroup Icterohaemorrhagiae serovar Lai (strain 56601)).